Reading from the N-terminus, the 448-residue chain is Glutamyl-tRNA reductase (448 aa).

Substrate-binding positions include 49–52 (TCNR), Ser-109, 114–116 (ETQ), and Gln-120. Cys-50 (nucleophile) is an active-site residue. Residue 189–194 (GAGEMG) participates in NADP(+) binding.

Belongs to the glutamyl-tRNA reductase family. In terms of assembly, homodimer.

The enzyme catalyses (S)-4-amino-5-oxopentanoate + tRNA(Glu) + NADP(+) = L-glutamyl-tRNA(Glu) + NADPH + H(+). It participates in porphyrin-containing compound metabolism; protoporphyrin-IX biosynthesis; 5-aminolevulinate from L-glutamyl-tRNA(Glu): step 1/2. Catalyzes the NADPH-dependent reduction of glutamyl-tRNA(Glu) to glutamate 1-semialdehyde (GSA). This chain is Glutamyl-tRNA reductase, found in Staphylococcus epidermidis (strain ATCC 12228 / FDA PCI 1200).